The chain runs to 371 residues: Cytochrome b (371 aa).

4 helical membrane-spanning segments follow: residues 25-45 (FGSMLLACSSMQVLTGFFLAV), 69-90 (WMMQNLHAIGASMFFICIYTHI), 105-125 (WLSGTTLLIMLMATAFFGYVL), and 170-190 (FFALHFILPFGIISLSSLHIM). Heme b is bound by residues H75 and H89. Residues H174 and H188 each coordinate heme b. H193 provides a ligand contact to a ubiquinone. 4 helical membrane-spanning segments follow: residues 218–238 (YKDMLMLSLMILALLMTVAFF), 280–300 (LGGALALVMSIMILLTAPFTH), 312–332 (IMQLMFWTLVATFAVITWAAT), and 339–358 (FTTISQVASTMYFMFFITNP).

This sequence belongs to the cytochrome b family. As to quaternary structure, the cytochrome bc1 complex contains 3 respiratory subunits (MT-CYB, CYC1 and UQCRFS1), 2 core proteins (UQCRC1 and UQCRC2) and probably 6 low-molecular weight proteins. It depends on heme b as a cofactor.

Its subcellular location is the mitochondrion inner membrane. Its function is as follows. Component of the ubiquinol-cytochrome c reductase complex (complex III or cytochrome b-c1 complex) that is part of the mitochondrial respiratory chain. The b-c1 complex mediates electron transfer from ubiquinol to cytochrome c. Contributes to the generation of a proton gradient across the mitochondrial membrane that is then used for ATP synthesis. The chain is Cytochrome b (MT-CYB) from Eryx colubrinus colubrinus.